The sequence spans 1368 residues: MASWLYECLCEAELAQYYSHFTALGLQKIDELAKITMKDYSKLGVHDMNDRKRLFQLIKIIKIMQEEDKAVSIPERHLQTSSLRIKSQELRSGPRRQLNFDSPADNKDRNASNDGFEMCSLSDFSANEQKSTYLKVLEHMLPDDSQYHTKTGILNATAGDSYVQTEISTSLFSPNYLSAILGDCDIPIIQRISHVSGYNYGIPHSCIRQNTSEKQNPWTEMEKIRVCVRKRPLGMREVRRGEINIITVEDKETLLVHEKKEAVDLTQYILQHVFYFDEVFGEACTNQDVYMKTTHPLIQHIFNGGNATCFAYGQTGAGKTYTMIGTHENPGLYALAAKDIFRQLEVSQPRKHLFVWISFYEIYCGQLYDLLNRRKRLFAREDSKHMVQIVGLQELQVDSVELLLEVILKGSKERSTGATGVNADSSRSHAVIQIQIKDSAKRTFGRISFIDLAGSERAADARDSDRQTKMEGAEINQSLLALKECIRALDQEHTHTPFRQSKLTQVLKDSFIGNAKTCMIANISPSHVATEHTLNTLRYADRVKELKKGIKCCTSVTSRNRTSGNSSPKRIQSSPGALSEDKCSPKKVKLGFQQSLTVAAPGSTRGKVHPLTSHPPNIPFTSAPKVSGKRGGSRGSPSQEWVIHASPVKGTVRSGHVAKKKPEESAPLCSEKNRMGNKTVLGWESRASGPGEGLVRGKLSTKCKKVQTVQPVQKQLVSRVELSFGNAHHRAEYSQDSQRGTPARPASEAWTNIPPHQKEREEHLRFYHQQFQQPPLLQQKLKYQPLKRSLRQYRPPEGQLTNETPPLFHSYSENHDGAQVEELDDSDFSEDSFSHISSQRATKQRNTLENSEDSFFLHQTWGQGPEKQVAERQQSLFSSPRTGDKKDLTKSWVDSRDPINHRRAALDHSCSPSKGPVDWSRENSTSSGPSPRDSLAEKPYCSQVDFIYRQERGGGSSFDLRKDASQSEVSGENEGNLPSPEEDGFTISLSHVAVPGSPDQRDTVTTPLREVSADGPIQVTSTVKNGHAVPGEDPRGQLGTHAEYASGLMSPLTMSLLENPDNEGSPPSEQLVQDGATHSLVAESTGGPVVSHTVPSGDQEAALPVSSATRHLWLSSSPPDNKPGGDLPALSPSPIRQHPADKLPSREADLGEACQSRETVLFSHEHMGSEQYDADAEETGLDGSWGFPGKPFTTIHMGVPHSGPTLTPRTGSSDVADQLWAQERKHPTRLGWQEFGLSTDPIKLPCNSENVTWLKPRPISRCLARPSSPLVPSCSPKTAGTLRQPTLEQAQQVVIRAHQEQLDEMAELGFKEETLMSQLASNDFEDFVTQLDEIMVLKSKCIQSLRSQLQLYLTCHGPTAAPEGTVPS.

Positions 1-64 (MASWLYECLC…FQLIKIIKIM (64 aa)) constitute an SAM domain. The tract at residues 89 to 112 (ELRSGPRRQLNFDSPADNKDRNAS) is disordered. Phosphoserine is present on residues Ser102 and Ser112. Residues 223–546 (KIRVCVRKRP…LRYADRVKEL (324 aa)) form the Kinesin motor domain. Residue 313-320 (GQTGAGKT) coordinates ATP. Position 478 is a phosphoserine (Ser478). The tract at residues 478–709 (SLLALKECIR…STKCKKVQTV (232 aa)) is interaction with MPHOSPH9. Over residues 557–576 (TSRNRTSGNSSPKRIQSSPG) the composition is skewed to polar residues. Disordered regions lie at residues 557–584 (TSRN…DKCS) and 602–639 (GSTR…SPSQ). Ser584 is modified (phosphoserine). Residue Thr621 is modified to Phosphothreonine; by NEK2. Position 622 is a phosphoserine; by NEK2 (Ser622). Ser646 carries the post-translational modification Phosphoserine. 5 disordered regions span residues 651 to 670 (TVRS…PLCS), 729 to 753 (HRAE…WTNI), 792 to 849 (QYRP…NTLE), 864 to 938 (GPEK…LAEK), and 952 to 984 (RGGG…EEDG). Over residues 819–830 (QVEELDDSDFSE) the composition is skewed to acidic residues. Phosphoserine is present on residues Ser826 and Ser829. 2 stretches are compositionally biased toward polar residues: residues 839-849 (QRATKQRNTLE) and 871-881 (ERQQSLFSSPR). Residues 882-906 (TGDKKDLTKSWVDSRDPINHRRAAL) show a composition bias toward basic and acidic residues. Ser1012 is subject to Phosphoserine. 2 disordered regions span residues 1054–1073 (MSLL…QLVQ) and 1086–1148 (GGPV…SREA). The span at 1106-1119 (SSATRHLWLSSSPP) shows a compositional bias: polar residues. The segment covering 1138 to 1148 (HPADKLPSREA) has biased composition (basic and acidic residues).

This sequence belongs to the TRAFAC class myosin-kinesin ATPase superfamily. Kinesin family. In terms of assembly, interacts with CCP110, CEP97, TALPID3. Interacts with MPHOSPH9.

The protein localises to the cytoplasm. Its subcellular location is the cytoskeleton. It is found in the microtubule organizing center. It localises to the centrosome. The protein resides in the centriole. Functionally, microtubule-dependent motor protein that acts as a negative regulator of ciliogenesis by mediating recruitment of CCP110 to mother centriole in cycling cells, leading to restrict nucleation of cilia at centrioles. Mediates depolymerization of microtubules of centriolar origin, possibly to suppress aberrant cilia formation. Following activation by NEK2 involved in disassembly of primary cilium during G2/M phase but does not disassemble fully formed ciliary axonemes. As cilium assembly and disassembly is proposed to coexist in a dynamic equilibrium may suppress nascent cilium assembly and, potentially, ciliar re-assembly in cells that have already disassembled their cilia ensuring the completion of cilium removal in the later stages of the cell cycle. Plays an important role in recruiting MPHOSPH9, a negative regulator of cilia formation to the distal end of mother centriole. This is Kinesin-like protein KIF24 (KIF24) from Homo sapiens (Human).